The chain runs to 124 residues: Ribonuclease pancreatic (124 aa).

The tract at residues 1–24 (KETAAAKFQRQHMDSSTSSASSSN) is disordered. Lys-7 and Arg-10 together coordinate substrate. His-12 (proton acceptor) is an active-site residue. Intrachain disulfides connect Cys-26–Cys-84, Cys-40–Cys-95, Cys-58–Cys-110, and Cys-65–Cys-72. Asn-34 carries N-linked (GlcNAc...) asparagine; in river-breed only glycosylation. Substrate contacts are provided by residues 41–45 (KPVNT), Lys-66, and Arg-85. His-119 acts as the Proton donor in catalysis.

Belongs to the pancreatic ribonuclease family. Monomer. Interacts with and forms tight 1:1 complexes with RNH1. Dimerization of two such complexes may occur. Interaction with RNH1 inhibits this protein. Post-translationally, swamp breed ribonuclease do not bind carbohydrate, but there is evidence of a polymorphic form that does. As to expression, pancreas.

It localises to the secreted. It catalyses the reaction an [RNA] containing cytidine + H2O = an [RNA]-3'-cytidine-3'-phosphate + a 5'-hydroxy-ribonucleotide-3'-[RNA].. The catalysed reaction is an [RNA] containing uridine + H2O = an [RNA]-3'-uridine-3'-phosphate + a 5'-hydroxy-ribonucleotide-3'-[RNA].. Endonuclease that catalyzes the cleavage of RNA on the 3' side of pyrimidine nucleotides. Acts on single-stranded and double-stranded RNA. This Bubalus bubalis (Domestic water buffalo) protein is Ribonuclease pancreatic (RNASE1).